An 872-amino-acid polypeptide reads, in one-letter code: MEGIKLNLCLLCIFSCDIFALSNGNIHNVYGSAYSGASAGAYKTLPGSHPYGSKHVPVYKPMNKIPTPYISKKSYPAPYKPKGYYPTKRYQPTYGSKTNYPPIYKPIAKKLSSYKAIKTTYPAYKAKTSYPPSYKHKITYPPTYKPKITYPPTYKQKPSYPPSYKPKTTYPPTYKPKITYPPTYKRKPSYTPYKPKATYPPTYKPKITYPPTYKRKPSYTPYKPKTTYPPTYKPKISYPSIYKPKASYVSSYKSKKTYPPTYKPKISYPPTYKPKPSYPPTYKPKVTYPPTYKPKPSYPPTYKPKITYPPTYKPKPSYPTPYKQKPSYPPIYKSKSSYPTSYKSKKTYPPTYKPKITYPPTYKPKPSYPPSYKPKKTYSPTYKPKITYPPTYKPKPSYPPSYKPKTTYPPTYKPKISYPPTYKPKASYVSSYKSKKTYPPTYKPKISYPPTYKPKPSYPPTYKPKITYPPTYKPKPSYPPTYKPKITYPPTYKRKPSYPTPYKQKPSYPPIYKSKSSYPTSYKSKKTYPPTYKPKITYPPTYKPKPSYPPSYKPKTTYPPTYKPKIRYPPTYKPKASYPPTYKPKITYPPTYKPKPSYPTPYKQKPSYPPIYKSKSSYPTAYKSKKTYPPTYKPKITYPPTYKPKPSYPPSYRPKITYPPTYKPKKSYPQAYKSKGSYPPSYQPKKTYPPSYKPKKTYPPTYKPKISYPPTYKTKPSYPASYKRKTSYPPTYKPKISYPSTYKAKPSYPPTYKPKPSYASSYKPKIRYPPTYKPKPSYASSYKPKIRYPPTYKPKPSYASSYKPKIRYPPTYKPKPSYASSYKPKITYPPTYKPKISYPPTYKPKITYPPTYKPKISYPPAYKPKISYPSQY.

Positions 1–20 (MEGIKLNLCLLCIFSCDIFA) are cleaved as a signal peptide. Positions 21 to 41 (LSNGNIHNVYGSAYSGASAGA) are nonrepetitive linker. Repeat copies occupy residues 124-133 (YKAKTSYPPS), 134-143 (YKHKITYPPT), 144-153 (YKPKITYPPT), 154-163 (YKQKPSYPPS), 174-183 (YKPKITYPPT), 184-192 (YKRKPSYTP), 193-202 (YKPKATYPPT), 203-212 (YKPKITYPPT), 213-221 (YKRKPSYTP), 222-231 (YKPKTTYPPT), 232-241 (YKPKISYPSI), 242-251 (YKPKASYVSS), 252-261 (YKSKKTYPPT), 262-271 (YKPKISYPPT), 272-281 (YKPKPSYPPT), 282-291 (YKPKVTYPPT), 292-301 (YKPKPSYPPT), 302-311 (YKPKITYPPT), 312-321 (YKPKPSYPTP), 322-331 (YKQKPSYPPI), 332-341 (YKSKSSYPTS), 342-351 (YKSKKTYPPT), 352-361 (YKPKITYPPT), 362-371 (YKPKPSYPPS), 372-381 (YKPKKTYSPT), 382-391 (YKPKITYPPT), 402-411 (YKPKTTYPPT), 412-421 (YKPKISYPPT), 422-431 (YKPKASYVSS), 432-441 (YKSKKTYPPT), 442-451 (YKPKISYPPT), 452-461 (YKPKPSYPPT), 462-471 (YKPKITYPPT), 472-481 (YKPKPSYPPT), 482-491 (YKPKITYPPT), 502-511 (YKQKPSYPPI), 512-521 (YKSKSSYPTS), 522-531 (YKSKKTYPPT), 532-541 (YKPKITYPPT), 542-551 (YKPKPSYPPS), 552-561 (YKPKTTYPPT), 562-571 (YKPKIRYPPT), 572-581 (YKPKASYPPT), 582-591 (YKPKITYPPT), 602-611 (YKQKPSYPPI), 612-621 (YKSKSSYPTA), 622-631 (YKSKKTYPPT), 632-641 (YKPKITYPPT), 642-651 (YKPKPSYPPS), 652-661 (YRPKITYPPT), 662-671 (YKPKKSYPQA), 672-681 (YKSKGSYPPS), 682-691 (YQPKKTYPPS), 702-711 (YKPKISYPPT), 712-721 (YKTKPSYPAS), 722-731 (YKRKTSYPPT), 732-741 (YKPKISYPST), 742-751 (YKAKPSYPPT), 752-761 (YKPKPSYASS), 762-771 (YKPKIRYPPT), 772-781 (YKPKPSYASS), 782-791 (YKPKIRYPPT), 792-801 (YKPKPSYASS), 812-821 (YKPKPSYASS), 822-831 (YKPKITYPPT), 832-841 (YKPKISYPPT), 842-851 (YKPKITYPPT), 852-861 (YKPKISYPPA), and 862-871 (YKPKISYPSQ). A 69 X 10 AA tandem repeats of Y-[KRQ]-[PSTAHQR]-K-[AIPTSKGV]-[STR]-Y-[PTSVA]-[PSTQA]-[STYIPAQ] region spans residues 124–871 (YKAKTSYPPS…YKPKISYPSQ (748 aa)). The interval 184 to 192 (YKRKPSYTP) is nonapeptide 1. A nonapeptide 2 region spans residues 213 to 221 (YKRKPSYTP). 2 stretches are compositionally biased toward pro residues: residues 273–282 (KPKPSYPPTY) and 291–302 (TYKPKPSYPPTY). The segment at 273–781 (KPKPSYPPTY…YKPKPSYASS (509 aa)) is disordered. Residues 320–360 (TPYKQKPSYPPIYKSKSSYPTSYKSKKTYPPTYKPKITYPP) are compositionally biased toward low complexity. Over residues 361 to 372 (TYKPKPSYPPSY) the composition is skewed to pro residues. The span at 377–390 (TYSPTYKPKITYPP) shows a compositional bias: low complexity. The span at 391-402 (TYKPKPSYPPSY) shows a compositional bias: pro residues. A compositionally biased stretch (low complexity) spans 403-450 (KPKTTYPPTYKPKISYPPTYKPKASYVSSYKSKKTYPPTYKPKISYPP). Pro residues-rich tracts occupy residues 451–462 (TYKPKPSYPPTY) and 471–482 (TYKPKPSYPPTY). Over residues 501-540 (PYKQKPSYPPIYKSKSSYPTSYKSKKTYPPTYKPKITYPP) the composition is skewed to low complexity. The span at 541 to 552 (TYKPKPSYPPSY) shows a compositional bias: pro residues. 2 stretches are compositionally biased toward low complexity: residues 568 to 590 (YPPT…TYPP) and 600 to 640 (TPYK…TYPP). The span at 641-652 (TYKPKPSYPPSY) shows a compositional bias: pro residues. Composition is skewed to low complexity over residues 677–690 (SYPP…TYPP) and 698–719 (YPPT…PSYP). Residues 754–763 (PKPSYASSYK) are compositionally biased toward low complexity.

Hydroxylated on proline (mono- or dihydroxylation) and tyrosine residues (to L-DOPA = 3',4'-dihydroxyphenylalanine) of the tandem repeats. Produced by the byssal gland.

The protein localises to the secreted. Functionally, provides adhesiveness to the mussel's foot. Mussels produce one of the strongest water insoluble glues. The mussel's adhesive is a bundle of threads, called a byssus, formed by a fibrous collagenous core coated with adhesive proteins. In Mytilus coruscus (Sea mussel), this protein is Adhesive plaque matrix protein (FP1).